Consider the following 491-residue polypeptide: Cobyric acid synthase (491 aa).

The 194-residue stretch at 251–444 folds into the GATase cobBQ-type domain; sequence GITIAVIRLP…LHGLFTNDEF (194 aa). Cys-329 acts as the Nucleophile in catalysis. The active site involves His-436.

The protein belongs to the CobB/CobQ family. CobQ subfamily.

It participates in cofactor biosynthesis; adenosylcobalamin biosynthesis. In terms of biological role, catalyzes amidations at positions B, D, E, and G on adenosylcobyrinic A,C-diamide. NH(2) groups are provided by glutamine, and one molecule of ATP is hydrogenolyzed for each amidation. The chain is Cobyric acid synthase from Chloroflexus aggregans (strain MD-66 / DSM 9485).